The primary structure comprises 53 residues: Large ribosomal subunit protein bL32c (53 aa).

It belongs to the bacterial ribosomal protein bL32 family.

It is found in the plastid. Its subcellular location is the chloroplast. The protein is Large ribosomal subunit protein bL32c of Coffea arabica (Arabian coffee).